Consider the following 509-residue polypeptide: tRNA-2-methylthio-N(6)-dimethylallyladenosine synthase (509 aa).

A compositionally biased stretch (polar residues) spans 1-15 (MNEQQRLASQQVNSS). The tract at residues 1-23 (MNEQQRLASQQVNSSTKKEEKDY) is disordered. The region spanning 66-184 (RKFYIRTYGC…LPYILKDAMF (119 aa)) is the MTTase N-terminal domain. Residues cysteine 75, cysteine 111, cysteine 145, cysteine 221, cysteine 225, and cysteine 228 each contribute to the [4Fe-4S] cluster site. A Radical SAM core domain is found at 207–437 (RRGDIKAWVN…NALVNKLAIE (231 aa)). In terms of domain architecture, TRAM spans 440-503 (DRYKGQIVEV…TWSLNGELVE (64 aa)).

This sequence belongs to the methylthiotransferase family. MiaB subfamily. Monomer. [4Fe-4S] cluster serves as cofactor.

The protein localises to the cytoplasm. It catalyses the reaction N(6)-dimethylallyladenosine(37) in tRNA + (sulfur carrier)-SH + AH2 + 2 S-adenosyl-L-methionine = 2-methylsulfanyl-N(6)-dimethylallyladenosine(37) in tRNA + (sulfur carrier)-H + 5'-deoxyadenosine + L-methionine + A + S-adenosyl-L-homocysteine + 2 H(+). In terms of biological role, catalyzes the methylthiolation of N6-(dimethylallyl)adenosine (i(6)A), leading to the formation of 2-methylthio-N6-(dimethylallyl)adenosine (ms(2)i(6)A) at position 37 in tRNAs that read codons beginning with uridine. This is tRNA-2-methylthio-N(6)-dimethylallyladenosine synthase from Bacillus anthracis.